We begin with the raw amino-acid sequence, 214 residues long: ATP-dependent Clp protease proteolytic subunit (214 aa).

The active-site Nucleophile is serine 110. The active site involves histidine 135.

This sequence belongs to the peptidase S14 family. As to quaternary structure, fourteen ClpP subunits assemble into 2 heptameric rings which stack back to back to give a disk-like structure with a central cavity, resembling the structure of eukaryotic proteasomes.

It localises to the cytoplasm. It carries out the reaction Hydrolysis of proteins to small peptides in the presence of ATP and magnesium. alpha-casein is the usual test substrate. In the absence of ATP, only oligopeptides shorter than five residues are hydrolyzed (such as succinyl-Leu-Tyr-|-NHMec, and Leu-Tyr-Leu-|-Tyr-Trp, in which cleavage of the -Tyr-|-Leu- and -Tyr-|-Trp bonds also occurs).. Its function is as follows. Cleaves peptides in various proteins in a process that requires ATP hydrolysis. Has a chymotrypsin-like activity. Plays a major role in the degradation of misfolded proteins. The polypeptide is ATP-dependent Clp protease proteolytic subunit (Legionella pneumophila (strain Corby)).